The chain runs to 281 residues: ATP synthase subunit a (281 aa).

The next 7 membrane-spanning stretches (helical) occupy residues 56 to 76 (KPML…WAAF), 117 to 137 (LVVS…IPVA), 144 to 164 (IIAY…TLTF), 181 to 201 (KSLG…NILI), 215 to 235 (FAGH…LNGV), 237 to 257 (IAYA…ELFI), and 259 to 279 (ALQA…AMAE).

The protein belongs to the ATPase A chain family. As to quaternary structure, F-type ATPases have 2 components, CF(1) - the catalytic core - and CF(0) - the membrane proton channel. CF(1) has five subunits: alpha(3), beta(3), gamma(1), delta(1), epsilon(1). CF(0) has three main subunits: a(1), b(2) and c(9-12). The alpha and beta chains form an alternating ring which encloses part of the gamma chain. CF(1) is attached to CF(0) by a central stalk formed by the gamma and epsilon chains, while a peripheral stalk is formed by the delta and b chains.

It localises to the cell membrane. Functionally, key component of the proton channel; it plays a direct role in the translocation of protons across the membrane. This chain is ATP synthase subunit a, found in Streptomyces lividans.